The sequence spans 548 residues: Chaperonin GroEL 2 (548 aa).

Residues 30–33, lysine 51, 87–91, glycine 415, 479–481, and aspartate 495 each bind ATP; these read TLGP, DGTTT, and NAA. Positions 524–548 are disordered; sequence APKDAPPTAPAGVPGAGAGGPGFDF. Positions 537–548 are enriched in gly residues; it reads PGAGAGGPGFDF.

This sequence belongs to the chaperonin (HSP60) family. Forms a cylinder of 14 subunits composed of two heptameric rings stacked back-to-back. Interacts with the co-chaperonin GroES.

Its subcellular location is the cytoplasm. It carries out the reaction ATP + H2O + a folded polypeptide = ADP + phosphate + an unfolded polypeptide.. Its function is as follows. Together with its co-chaperonin GroES, plays an essential role in assisting protein folding. The GroEL-GroES system forms a nano-cage that allows encapsulation of the non-native substrate proteins and provides a physical environment optimized to promote and accelerate protein folding. This is Chaperonin GroEL 2 from Burkholderia pseudomallei (strain 668).